The sequence spans 226 residues: Potassium/proton antiporter CemA (226 aa).

3 helical membrane-spanning segments follow: residues 7–27 (FTSL…SLSF), 111–131 (IICF…LFIL), and 186–206 (IISG…KYWI).

Belongs to the CemA family.

It is found in the plastid. It localises to the chloroplast inner membrane. The catalysed reaction is K(+)(in) + H(+)(out) = K(+)(out) + H(+)(in). In terms of biological role, contributes to K(+)/H(+) antiport activity by supporting proton efflux to control proton extrusion and homeostasis in chloroplasts in a light-dependent manner to modulate photosynthesis. Prevents excessive induction of non-photochemical quenching (NPQ) under continuous-light conditions. Indirectly promotes efficient inorganic carbon uptake into chloroplasts. The sequence is that of Potassium/proton antiporter CemA from Buxus microphylla (Littleleaf boxwood).